A 764-amino-acid polypeptide reads, in one-letter code: DNA-binding protein SATB1 (764 aa).

The segment covering 1-15 has biased composition (basic and acidic residues); it reads MDHLNEATQGKEHSE. Positions 1–56 are disordered; that stretch reads MDHLNEATQGKEHSEMSNNVSDPKGPPAKIARLEQNGSPLGRGRLGSTGGKMQGVP. The short motif at 20–40 is the Nuclear localization signal element; the sequence is VSDPKGPPAKIARLEQNGSPL. Over residues 43–52 the composition is skewed to gly residues; the sequence is GRLGSTGGKM. K51 is covalently cross-linked (Glycyl lysine isopeptide (Lys-Gly) (interchain with G-Cter in SUMO2)). Residues 71-172 enclose the CMP domain; the sequence is GTMLPVFCVV…VVTLKIQLHS (102 aa). At K136 the chain carries N6-acetyllysine. The Protein interaction signature appears at 139 to 143; it reads PVPLS. Residues 175–248 enclose the CUTL domain; that stretch reads KLEDLPPEQW…WYKHFKKTKD (74 aa). S185 is subject to Phosphoserine. Residues 224-278 form a nuclear matrix targeting sequence (NMTS) region; sequence YYANVSAAKCQEFGRWYKHFKKTKDMMVEMDSLSELSQQGANHVNFGQQPVPGNT. The Nuclear matrix targeting sequence (NMTS) motif lies at 224-278; it reads YYANVSAAKCQEFGRWYKHFKKTKDMMVEMDSLSELSQQGANHVNFGQQPVPGNT. Residues 266 to 296 show a composition bias toward polar residues; sequence HVNFGQQPVPGNTAEQPPSPAQLSHGSQPSV. The interval 266–307 is disordered; the sequence is HVNFGQQPVPGNTAEQPPSPAQLSHGSQPSVRTPLPNLHPGL. A DNA-binding region (CUT 1) is located at residues 361 to 448; that stretch reads LEQQVSTNTE…ERDRIYQDER (88 aa). DNA is bound by residues Q390, 400–410, and N425; that span reads RTQGLLSEILR. Residues 450–474 are disordered; sequence RSLNAASAMGPAPLLSTPPSRPPQV. The segment at residues 484 to 571 is a DNA-binding region (CUT 2); the sequence is NGKPENNTMN…ERDAIYEQES (88 aa). A disordered region spans residues 591-650; the sequence is QIQQQQQQQQQQQQQQQPPPPPPQPQPQPQAGPRLPPRQPTVASSAESDEENRQKTRPRT. A compositionally biased stretch (low complexity) spans 593-606; sequence QQQQQQQQQQQQQQ. Residues 607 to 629 show a composition bias toward pro residues; the sequence is QPPPPPPQPQPQPQAGPRLPPRQ. S638 bears the Phosphoserine mark. Residues 646–705 constitute a DNA-binding region (homeobox); that stretch reads TRPRTKISVEALGILQSFIQDVGLYPDEEAIQTLSAQLDLPKYTIIKFFQNQRYYLKHHG. A Glycyl lysine isopeptide (Lys-Gly) (interchain with G-Cter in SUMO) cross-link involves residue K745.

This sequence belongs to the CUT homeobox family. In terms of assembly, interacts with PCAF. Interacts with sumoylated PML and HDAC1 Tat via the CMP domain. Also interacts with DYNLT3 and POLR2J2. Binds to EP300. Homodimer. Part of the nuclear protein complex gamma-globin promoter and enhancer binding factor (gamma-PE) composed at least of SATB1 and HOXB2. Interaction with CtBP1 when not acetylated stabilizes attachment to DNA and promotes transcription repression. Interacts with CUX1 (via DNA-binding domains); the interaction inhibits the attachment of both proteins to DNA. Post-translationally, sumoylated. Sumoylation promotes cleavage by caspases. Phosphorylated by PKC. Acetylated by PCAF. Phosphorylated form interacts with HDAC1, but unphosphorylated form interacts with PCAF. DNA binding properties are activated by phosphorylation and inactivated by acetylation. In opposition, gene expression is down-regulated by phosphorylation but up-regulated by acetylation. In terms of processing, cleaved at Asp-254 by caspase-3 and caspase-6 during T-cell apoptosis in thymus and during B-cell stimulation. The cleaved forms cannot dimerize and lose transcription regulation function because of impaired DNA and chromatin association. In terms of tissue distribution, expressed in the subventricular zone, rostral migratory stream and in the olfactory bulb (at protein level). Mainly expressed in thymus, spleen, and lymph nodes with a lower level observed in the brain.

It localises to the nucleus. The protein localises to the PML body. In terms of biological role, required for the switching of fetal globin species, and beta- and gamma-globin genes regulation during erythroid differentiation. Plays a role in chromatin organization and nuclear architecture during apoptosis. Crucial silencing factor contributing to the initiation of X inactivation mediated by Xist RNA that occurs during embryogenesis and in lymphoma. Binds to DNA at special AT-rich sequences, the consensus SATB1-binding sequence (CSBS), at nuclear matrix- or scaffold-associated regions. Thought to recognize the sugar-phosphate structure of double-stranded DNA. Transcriptional repressor controlling nuclear and viral gene expression in a phosphorylated and acetylated status-dependent manner, by binding to matrix attachment regions (MARs) of DNA and inducing a local chromatin-loop remodeling. Acts as a docking site for several chromatin remodeling enzymes and also by recruiting corepressors (HDACs) or coactivators (HATs) directly to promoters and enhancers. Modulates genes that are essential in the maturation of the immune T-cell CD8SP from thymocytes. Promotes neuronal differentiation of neural stem/progenitor cells in the adult subventricular zone, possibly by positively regulating the expression of NEUROD1. The polypeptide is DNA-binding protein SATB1 (Satb1) (Mus musculus (Mouse)).